The following is a 431-amino-acid chain: Glucose-1-phosphate adenylyltransferase (431 aa).

A beta-D-fructose 1,6-bisphosphate-binding site is contributed by lysine 39. Arginine 40, histidine 46, and arginine 52 together coordinate AMP. Alpha-D-glucose 1-phosphate is bound by residues tyrosine 114, glycine 179, 194-195 (EK), and serine 212. AMP-binding residues include glutamate 370 and arginine 386. Beta-D-fructose 1,6-bisphosphate-binding positions include 419 to 423 (REMLR) and 429 to 431 (QER).

It belongs to the bacterial/plant glucose-1-phosphate adenylyltransferase family. Homotetramer.

The enzyme catalyses alpha-D-glucose 1-phosphate + ATP + H(+) = ADP-alpha-D-glucose + diphosphate. The protein operates within glycan biosynthesis; glycogen biosynthesis. Allosterically activated by fructose-1,6-bisphosphate (F16BP) and inhibited by AMP. Its function is as follows. Involved in the biosynthesis of ADP-glucose, a building block required for the elongation reactions to produce glycogen. Catalyzes the reaction between ATP and alpha-D-glucose 1-phosphate (G1P) to produce pyrophosphate and ADP-Glc. The sequence is that of Glucose-1-phosphate adenylyltransferase from Salmonella typhi.